The chain runs to 31 residues: U14-ctenitoxin-Co1a (31 aa).

Disulfide bonds are present. Expressed by the venom gland.

The protein localises to the secreted. In terms of biological role, omega-agatoxins are antagonists of voltage-gated calcium channels (Cav). This chain is U14-ctenitoxin-Co1a, found in Ctenus ornatus (Brazilian spider).